An 852-amino-acid polypeptide reads, in one-letter code: Leucine--tRNA ligase (852 aa).

The 'HIGH' region motif lies at 42-52; that stretch reads PYPSGKLHMGH. The segment at 586–606 is disordered; it reads NKYVPADQVDPNDPKDPETGE. The short motif at 614–618 is the 'KMSKS' region element; sequence KMSKS. Residue lysine 617 coordinates ATP.

This sequence belongs to the class-I aminoacyl-tRNA synthetase family.

It is found in the cytoplasm. The enzyme catalyses tRNA(Leu) + L-leucine + ATP = L-leucyl-tRNA(Leu) + AMP + diphosphate. This chain is Leucine--tRNA ligase, found in Picosynechococcus sp. (strain ATCC 27264 / PCC 7002 / PR-6) (Agmenellum quadruplicatum).